Consider the following 752-residue polypeptide: Multifunctional tryptophan biosynthesis protein (752 aa).

The Glutamine amidotransferase type-1 domain maps to 3-202 (FTLLIDNYDS…IQMKGGKWGG (200 aa)). Residue 58–60 (GPG) coordinates L-glutamine. Cys86 serves as the catalytic Nucleophile; for GATase activity. Residue 136–137 (SL) participates in L-glutamine binding. Active-site for GATase activity residues include His176 and Glu178. The tract at residues 231–495 (ILNRIHAQRL…DTKAFLRSLI (265 aa)) is indole-3-glycerol phosphate synthase. The N-(5'-phosphoribosyl)anthranilate isomerase stretch occupies residues 509–752 (LVKICGIRST…VEAFVKAVRG (244 aa)).

It catalyses the reaction N-(5-phospho-beta-D-ribosyl)anthranilate = 1-(2-carboxyphenylamino)-1-deoxy-D-ribulose 5-phosphate. The enzyme catalyses 1-(2-carboxyphenylamino)-1-deoxy-D-ribulose 5-phosphate + H(+) = (1S,2R)-1-C-(indol-3-yl)glycerol 3-phosphate + CO2 + H2O. The catalysed reaction is chorismate + L-glutamine = anthranilate + pyruvate + L-glutamate + H(+). Its pathway is amino-acid biosynthesis; L-tryptophan biosynthesis; L-tryptophan from chorismate: step 1/5. It participates in amino-acid biosynthesis; L-tryptophan biosynthesis; L-tryptophan from chorismate: step 3/5. It functions in the pathway amino-acid biosynthesis; L-tryptophan biosynthesis; L-tryptophan from chorismate: step 4/5. Trifunctional enzyme bearing the Gln amidotransferase (GATase) domain of anthranilate synthase, indole-glycerolphosphate synthase, and phosphoribosylanthranilate isomerase activities. The chain is Multifunctional tryptophan biosynthesis protein (TRP1) from Cryptococcus neoformans var. neoformans serotype D (strain B-3501A) (Filobasidiella neoformans).